Reading from the N-terminus, the 779-residue chain is Protocadherin beta-8 (779 aa).

The first 28 residues, 1–28, serve as a signal peptide directing secretion; it reads METALTKTPEKRQVIFLAILLLLWEASS. Topologically, residues 29-690 are extracellular; that stretch reads EAISYSMPEE…QEEDMLTLYL (662 aa). Cadherin domains are found at residues 75–133, 134–242, 243–346, 347–450, and 451–560; these read LQLD…FPEF, PDTE…APQF, LQSL…APKL, TISS…APAF, and TQTS…APFV. The cysteines at positions 96 and 102 are disulfide-linked. A glycan (N-linked (GlcNAc...) asparagine) is linked at asparagine 169. The O-linked (Man) serine glycan is linked to serine 223. Residues threonine 225 and threonine 227 are each glycosylated (O-linked (Man) threonine). N-linked (GlcNAc...) asparagine glycosylation is present at asparagine 417. N-linked (GlcNAc...) asparagine glycosylation is present at asparagine 566. The region spanning 575 to 675 is the Cadherin 6 domain; the sequence is LPRAAEPGYL…SQPYLPLPEV (101 aa). A helical membrane pass occupies residues 691 to 711; it reads VIALASVSSLFLLSVLLFVGV. Over 712–779 the chain is Cytoplasmic; sequence KLCKKAREAS…IIPSSLLQDS (68 aa).

As to quaternary structure, forms homodimers in trans (molecules expressed by two different cells). Forms promiscuous heterodimers in cis (at the plasma membrane of the same cell) with other protocadherins.

The protein resides in the cell membrane. Its function is as follows. Calcium-dependent cell-adhesion protein involved in cells self-recognition and non-self discrimination. Thereby, it is involved in the establishment and maintenance of specific neuronal connections in the brain. The polypeptide is Protocadherin beta-8 (Mus musculus (Mouse)).